The sequence spans 380 residues: Queuine tRNA-ribosyltransferase (380 aa).

D96 serves as the catalytic Proton acceptor. Residues 96 to 100, D150, Q193, and G220 each bind substrate; that span reads DSGGF. The interval 251–257 is RNA binding; sequence GVGAPDS. D270 serves as the catalytic Nucleophile. The RNA binding; important for wobble base 34 recognition stretch occupies residues 275-279; it reads TRIAR. Positions 308, 310, 313, and 339 each coordinate Zn(2+).

Belongs to the queuine tRNA-ribosyltransferase family. Homodimer. Within each dimer, one monomer is responsible for RNA recognition and catalysis, while the other monomer binds to the replacement base PreQ1. Requires Zn(2+) as cofactor.

The catalysed reaction is 7-aminomethyl-7-carbaguanine + guanosine(34) in tRNA = 7-aminomethyl-7-carbaguanosine(34) in tRNA + guanine. It functions in the pathway tRNA modification; tRNA-queuosine biosynthesis. Catalyzes the base-exchange of a guanine (G) residue with the queuine precursor 7-aminomethyl-7-deazaguanine (PreQ1) at position 34 (anticodon wobble position) in tRNAs with GU(N) anticodons (tRNA-Asp, -Asn, -His and -Tyr). Catalysis occurs through a double-displacement mechanism. The nucleophile active site attacks the C1' of nucleotide 34 to detach the guanine base from the RNA, forming a covalent enzyme-RNA intermediate. The proton acceptor active site deprotonates the incoming PreQ1, allowing a nucleophilic attack on the C1' of the ribose to form the product. After dissociation, two additional enzymatic reactions on the tRNA convert PreQ1 to queuine (Q), resulting in the hypermodified nucleoside queuosine (7-(((4,5-cis-dihydroxy-2-cyclopenten-1-yl)amino)methyl)-7-deazaguanosine). This Streptococcus thermophilus (strain ATCC BAA-250 / LMG 18311) protein is Queuine tRNA-ribosyltransferase.